An 895-amino-acid chain; its full sequence is Serine-rich coiled-coil domain-containing protein 1 (895 aa).

Disordered stretches follow at residues 1–142 (MGDS…KEPS), 154–177 (SGRS…KQST), 332–394 (ELHS…RTLG), and 459–497 (RSSS…SSKM). Residues 43–56 (SSSPSSTNSSSGST) show a composition bias toward low complexity. Over residues 83–102 (TEQNLSISNGAQPSHSNMQK) the composition is skewed to polar residues. Basic and acidic residues predominate over residues 131–142 (LTEDFEREKEPS). A compositionally biased stretch (polar residues) spans 348 to 358 (SLQSTELSVGN). Positions 675-705 (MLRLQLKDRDELISQLQAELEKVQHLQKAFA) form a coiled coil. The interval 731–753 (QGGRETTHRNRTMSQSHSTRDRK) is disordered.

This sequence belongs to the CCSER family.

The chain is Serine-rich coiled-coil domain-containing protein 1 (Ccser1) from Mus musculus (Mouse).